The primary structure comprises 95 residues: uncharacterized protein (95 aa).

The interval 46-68 is disordered; the sequence is GDRGTNGRTEAEHDGIPHSRKKV.

This is an uncharacterized protein from Schizosaccharomyces pombe (strain 972 / ATCC 24843) (Fission yeast).